The chain runs to 491 residues: Inositol-pentakisphosphate 2-kinase (491 aa).

The EXKPK motif motif lies at 136 to 140 (EIKPK). S282 is modified (phosphoserine).

Belongs to the IPK1 type 2 family. As to expression, ubiquitously expressed, with high expression in heart, brain, testis and placenta.

The protein resides in the cytoplasm. It localises to the nucleus. The catalysed reaction is 1D-myo-inositol 1,3,4,5,6-pentakisphosphate + ATP = 1D-myo-inositol hexakisphosphate + ADP + H(+). Its function is as follows. Phosphorylates Ins(1,3,4,5,6)P5 at position 2 to form Ins(1,2,3,4,5,6)P6 (InsP6 or phytate). InsP6 is involved in many processes such as mRNA export, non-homologous end-joining, endocytosis, ion channel regulation. It also protects cells from TNF-alpha-induced apoptosis. The protein is Inositol-pentakisphosphate 2-kinase (IPPK) of Homo sapiens (Human).